Reading from the N-terminus, the 91-residue chain is Mercuric transport protein periplasmic component (91 aa).

An N-terminal signal peptide occupies residues 1–19 (MKKLFASLALAAAVAPVWA). An HMA domain is found at 22–88 (QTVTLAVPGM…ATADAGYPSS (67 aa)). Hg(2+)-binding residues include Cys-33 and Cys-36.

It belongs to the MerP family. As to quaternary structure, monomer.

Its subcellular location is the periplasm. Functionally, involved in mercury resistance. Acts as a mercury scavenger that specifically binds to a mercuric ion in the periplasm and probably passes it to the cytoplasmic mercuric reductase MerA via the mercuric transport protein MerT. This chain is Mercuric transport protein periplasmic component, found in Shigella flexneri.